Consider the following 119-residue polypeptide: ATP-dependent Clp protease adapter protein ClpS (119 aa).

A disordered region spans residues 1–33 (MATRIPKTPSTPPAQKPAGDDGDSVVLERRPQK).

Belongs to the ClpS family. In terms of assembly, binds to the N-terminal domain of the chaperone ClpA.

Its function is as follows. Involved in the modulation of the specificity of the ClpAP-mediated ATP-dependent protein degradation. The polypeptide is ATP-dependent Clp protease adapter protein ClpS (Variovorax paradoxus (strain S110)).